Here is a 367-residue protein sequence, read N- to C-terminus: GPN-loop GTPase 1 (367 aa).

Residues 15–22 (GMAGSGKT) and 18–23 (GSGKTT) contribute to the GTP site. The Gly-Pro-Asn (GPN)-loop; involved in dimer interface motif lies at 75–77 (GPN). 178 to 181 (NKCD) provides a ligand contact to GTP. A coiled-coil region spans residues 247–290 (EGMDDFLEAVKAKVKEYEEEYVPEMERMKEIQRQTKERQKEAQL). The tract at residues 306–332 (VGLTVSDAEDEYNGELVDPDEDDGLTA) is disordered. Position 311 is a phosphoserine (Ser-311). Over residues 312 to 332 (DAEDEYNGELVDPDEDDGLTA) the composition is skewed to acidic residues.

This sequence belongs to the GPN-loop GTPase family. Heterodimers with gpn2 or fet5/gpn3. Binds to RNA polymerase II (RNAPII).

It localises to the cytoplasm. Functionally, small GTPase required for proper nuclear import of RNA polymerase II (RNAPII). May act at an RNAP assembly step prior to nuclear import. The sequence is that of GPN-loop GTPase 1 from Schizosaccharomyces pombe (strain 972 / ATCC 24843) (Fission yeast).